A 278-amino-acid chain; its full sequence is Translation initiation factor IF-3, mitochondrial (278 aa).

The transit peptide at 1-31 (MAALFLKRLTLQTVKSENSCIRCFGKHILQK) directs the protein to the mitochondrion. Positions 249–278 (KAYKETQETQERDTLNKDHGNDKESNVLHQ) are disordered.

The protein belongs to the IF-3 family.

It is found in the mitochondrion. IF-3 binds to the 28S ribosomal subunit and shifts the equilibrium between 55S ribosomes and their 39S and 28S subunits in favor of the free subunits, thus enhancing the availability of 28S subunits on which protein synthesis initiation begins. The sequence is that of Translation initiation factor IF-3, mitochondrial (MTIF3) from Homo sapiens (Human).